The following is a 369-amino-acid chain: Porphobilinogen deaminase, chloroplastic (369 aa).

The N-terminal 46 residues, 1-46 (MEMTLYSSSSFSLPSAPSNPSLSLFTSSFRFSSFKTSPFSKCRIRA), are a transit peptide targeting the chloroplast. An S-(dipyrrolylmethanemethyl)cysteine modification is found at Cys-303.

This sequence belongs to the HMBS family. Dipyrromethane is required as a cofactor.

It is found in the plastid. The protein resides in the chloroplast. It carries out the reaction 4 porphobilinogen + H2O = hydroxymethylbilane + 4 NH4(+). It participates in porphyrin-containing compound metabolism; protoporphyrin-IX biosynthesis; coproporphyrinogen-III from 5-aminolevulinate: step 2/4. Its pathway is porphyrin-containing compound metabolism; chlorophyll biosynthesis. In terms of biological role, tetrapolymerization of the monopyrrole PBG into the hydroxymethylbilane pre-uroporphyrinogen in several discrete steps. The polypeptide is Porphobilinogen deaminase, chloroplastic (HEMC) (Pisum sativum (Garden pea)).